The chain runs to 190 residues: Xanthine phosphoribosyltransferase (190 aa).

Residues Leu20 and Asn27 each contribute to the xanthine site. Residue 128-132 (ANGEA) participates in 5-phospho-alpha-D-ribose 1-diphosphate binding. Position 156 (Lys156) interacts with xanthine.

It belongs to the purine/pyrimidine phosphoribosyltransferase family. Xpt subfamily. In terms of assembly, homodimer.

The protein localises to the cytoplasm. It catalyses the reaction XMP + diphosphate = xanthine + 5-phospho-alpha-D-ribose 1-diphosphate. It functions in the pathway purine metabolism; XMP biosynthesis via salvage pathway; XMP from xanthine: step 1/1. Functionally, converts the preformed base xanthine, a product of nucleic acid breakdown, to xanthosine 5'-monophosphate (XMP), so it can be reused for RNA or DNA synthesis. In Clostridium botulinum (strain Eklund 17B / Type B), this protein is Xanthine phosphoribosyltransferase.